A 464-amino-acid chain; its full sequence is Uronate isomerase (464 aa).

It belongs to the metallo-dependent hydrolases superfamily. Uronate isomerase family.

The catalysed reaction is D-glucuronate = D-fructuronate. The enzyme catalyses aldehydo-D-galacturonate = keto-D-tagaturonate. The protein operates within carbohydrate metabolism; pentose and glucuronate interconversion. The protein is Uronate isomerase of Caldicellulosiruptor saccharolyticus (strain ATCC 43494 / DSM 8903 / Tp8T 6331).